A 967-amino-acid chain; its full sequence is RNA polymerase-associated protein RapA (967 aa).

In terms of domain architecture, Helicase ATP-binding spans 163–337 (EVGQRTAPRV…FARLSLLDPD (175 aa)). 176-183 (DEVGLGKT) contacts ATP. Residues 283–286 (DEAH) carry the DEAH box motif. The 172-residue stretch at 489-660 (RLEWLITFLK…KFLQNPTALE (172 aa)) folds into the Helicase C-terminal domain.

Belongs to the SNF2/RAD54 helicase family. RapA subfamily. As to quaternary structure, interacts with the RNAP. Has a higher affinity for the core RNAP than for the holoenzyme. Its ATPase activity is stimulated by binding to RNAP.

In terms of biological role, transcription regulator that activates transcription by stimulating RNA polymerase (RNAP) recycling in case of stress conditions such as supercoiled DNA or high salt concentrations. Probably acts by releasing the RNAP, when it is trapped or immobilized on tightly supercoiled DNA. Does not activate transcription on linear DNA. Probably not involved in DNA repair. The protein is RNA polymerase-associated protein RapA of Pasteurella multocida (strain Pm70).